We begin with the raw amino-acid sequence, 287 residues long: MFKINPIFKKTKYITINTSKDNNINKENIPNIPEGMWVKCDRCGKTLYKKDLDENLKVCKFCNKHYRMNAWERIDLIVDTGTFREFGENITSKNPLDFSGYEDKLKGIKEKTKLKEGVITGKGKIYGKNVVIAVMDSRFMMGSMGSAVGEKITRAVEKATEERLPIIIFTTSGGARMQESMFSLMQMAKTSAAIARHNEAGLLYIPVLTDPTTGGVIASFAMLGDIILSEPGTLIGFAGRRVIEQTIKQKLPDDFQSAEFLLEHGFLDKIVNRNELKKVLYKILELH.

Residues 36–287 (MWVKCDRCGK…KVLYKILELH (252 aa)) form the CoA carboxyltransferase N-terminal domain. Residues Cys-40, Cys-43, Cys-59, and Cys-62 each coordinate Zn(2+). Residues 40-62 (CDRCGKTLYKKDLDENLKVCKFC) form a C4-type zinc finger.

Belongs to the AccD/PCCB family. In terms of assembly, acetyl-CoA carboxylase is a heterohexamer composed of biotin carboxyl carrier protein (AccB), biotin carboxylase (AccC) and two subunits each of ACCase subunit alpha (AccA) and ACCase subunit beta (AccD). Zn(2+) is required as a cofactor.

It is found in the cytoplasm. It carries out the reaction N(6)-carboxybiotinyl-L-lysyl-[protein] + acetyl-CoA = N(6)-biotinyl-L-lysyl-[protein] + malonyl-CoA. The protein operates within lipid metabolism; malonyl-CoA biosynthesis; malonyl-CoA from acetyl-CoA: step 1/1. Its function is as follows. Component of the acetyl coenzyme A carboxylase (ACC) complex. Biotin carboxylase (BC) catalyzes the carboxylation of biotin on its carrier protein (BCCP) and then the CO(2) group is transferred by the transcarboxylase to acetyl-CoA to form malonyl-CoA. The chain is Acetyl-coenzyme A carboxylase carboxyl transferase subunit beta from Clostridium novyi (strain NT).